Consider the following 512-residue polypeptide: UDP-N-acetylmuramoyl-L-alanyl-D-glutamate--2,6-diaminopimelate ligase (512 aa).

A UDP-N-acetyl-alpha-D-muramoyl-L-alanyl-D-glutamate-binding site is contributed by S32. G114 to T120 is an ATP binding site. Residues T156–T157, S183, and R191 contribute to the UDP-N-acetyl-alpha-D-muramoyl-L-alanyl-D-glutamate site. At K223 the chain carries N6-carboxylysine. Meso-2,6-diaminopimelate-binding positions include R395, D419–R422, G469, and E473. Residues D419–R422 carry the Meso-diaminopimelate recognition motif motif.

This sequence belongs to the MurCDEF family. MurE subfamily. The cofactor is Mg(2+). In terms of processing, carboxylation is probably crucial for Mg(2+) binding and, consequently, for the gamma-phosphate positioning of ATP.

The protein resides in the cytoplasm. It carries out the reaction UDP-N-acetyl-alpha-D-muramoyl-L-alanyl-D-glutamate + meso-2,6-diaminopimelate + ATP = UDP-N-acetyl-alpha-D-muramoyl-L-alanyl-gamma-D-glutamyl-meso-2,6-diaminopimelate + ADP + phosphate + H(+). Its pathway is cell wall biogenesis; peptidoglycan biosynthesis. Catalyzes the addition of meso-diaminopimelic acid to the nucleotide precursor UDP-N-acetylmuramoyl-L-alanyl-D-glutamate (UMAG) in the biosynthesis of bacterial cell-wall peptidoglycan. This Chlorobium phaeobacteroides (strain DSM 266 / SMG 266 / 2430) protein is UDP-N-acetylmuramoyl-L-alanyl-D-glutamate--2,6-diaminopimelate ligase.